The sequence spans 927 residues: Huntington interacting protein related 1 (927 aa).

One can recognise an ENTH domain in the interval 7 to 136; the sequence is AREVFVRAQL…TFHNKYPVVP (130 aa). The stretch at 336 to 524 forms a coiled coil; sequence RAVEDEKFAK…RESHANQLVQ (189 aa). In terms of domain architecture, I/LWEQ spans 673–914; sequence QTDIDKDVVG…ALRKQHYHMA (242 aa).

The protein belongs to the SLA2 family.

It is found in the cytoplasm. The protein resides in the cytoskeleton. Functionally, regulates pre-synaptic vesicle recycling at neuromuscular junctions of mechanosensory neurons. Plays a role in maintaining a normal defecation cycle. This chain is Huntington interacting protein related 1 (hipr-1), found in Caenorhabditis elegans.